A 356-amino-acid chain; its full sequence is Metacaspase-1 (356 aa).

A disordered region spans residues 1–47 (MYSGRSGAPPPAHSPYPNSYNHGPPGHSAGHNVPPPPPTQPVQFGHG). Active-site residues include His147 and Cys203.

Belongs to the peptidase C14B family.

In terms of biological role, involved in cell death (apoptosis). This Ajellomyces capsulatus (strain NAm1 / WU24) (Darling's disease fungus) protein is Metacaspase-1 (MCA1).